A 329-amino-acid polypeptide reads, in one-letter code: DNA-directed RNA polymerase subunit alpha (329 aa).

An alpha N-terminal domain (alpha-NTD) region spans residues 1-234 (MQGSVTEFLK…EQLDAFVELR (234 aa)). An alpha C-terminal domain (alpha-CTD) region spans residues 248 to 329 (FDPILLRPVD…WPPASLADDL (82 aa)).

It belongs to the RNA polymerase alpha chain family. As to quaternary structure, homodimer. The RNAP catalytic core consists of 2 alpha, 1 beta, 1 beta' and 1 omega subunit. When a sigma factor is associated with the core the holoenzyme is formed, which can initiate transcription.

It catalyses the reaction RNA(n) + a ribonucleoside 5'-triphosphate = RNA(n+1) + diphosphate. Functionally, DNA-dependent RNA polymerase catalyzes the transcription of DNA into RNA using the four ribonucleoside triphosphates as substrates. In Shewanella baltica (strain OS155 / ATCC BAA-1091), this protein is DNA-directed RNA polymerase subunit alpha.